Consider the following 181-residue polypeptide: Small ribosomal subunit protein bS16 (181 aa).

A disordered region spans residues 150-181 (KKAAEEAAKAAAEAPAEEAAPAEETATEAAAE). The span at 158-181 (KAAAEAPAEEAAPAEETATEAAAE) shows a compositional bias: low complexity.

Belongs to the bacterial ribosomal protein bS16 family.

In Bacteroides fragilis (strain YCH46), this protein is Small ribosomal subunit protein bS16.